The chain runs to 349 residues: MKEVGIVGYGSDLPKYRIKAEDIAGAWGKDAQAIKRGLVVNEKSVPGPDEDTATISVQAARRALSRAGINPKDIGAVYVGSESHPYAVKPTSGIVAEACGVSPDFTAADLEFACKAGTAGIQMCMGLVGSDMMEYAMAVGADTAQGAPGDALEYTAAAGGAAYIIGAKKEELIAKFNGTYSYTTDTPDFWRREHEHYPKHGGRFTGEPAYFKHVLNGAKGMMAKMDTTAKDYDYCVFHQPNGKFYISAAKQLGFTEEQYKYGLLTPYLGNTYSGAVPLGLSNILDHAKADDRIFVVSYGSGAGSDAFDITVTDRISEVVDKAITTEKLLESKKYVDYAVYLKYRGKIRM.

(3S)-3-hydroxy-3-methylglutaryl-CoA contacts are provided by aspartate 30 and alanine 31. Glutamate 82 acts as the Proton donor/acceptor in catalysis. Residues cysteine 114 and threonine 155 each contribute to the (3S)-3-hydroxy-3-methylglutaryl-CoA site. The active-site Acyl-thioester intermediate is the cysteine 114. Arginine 203 contacts CoA. The (3S)-3-hydroxy-3-methylglutaryl-CoA site is built by threonine 205 and histidine 238. Histidine 238 functions as the Proton donor/acceptor in the catalytic mechanism. Position 243 (lysine 243) interacts with CoA. Residues asparagine 270 and serine 300 each coordinate (3S)-3-hydroxy-3-methylglutaryl-CoA.

The protein belongs to the thiolase-like superfamily. Archaeal HMG-CoA synthase family. As to quaternary structure, interacts with acetoacetyl-CoA thiolase that catalyzes the precedent step in the pathway and with a DUF35 protein. The acetoacetyl-CoA thiolase/HMG-CoA synthase complex channels the intermediate via a fused CoA-binding site, which allows for efficient coupling of the endergonic thiolase reaction with the exergonic HMGCS reaction.

The enzyme catalyses acetoacetyl-CoA + acetyl-CoA + H2O = (3S)-3-hydroxy-3-methylglutaryl-CoA + CoA + H(+). It functions in the pathway metabolic intermediate biosynthesis; (R)-mevalonate biosynthesis; (R)-mevalonate from acetyl-CoA: step 2/3. Catalyzes the condensation of acetyl-CoA with acetoacetyl-CoA to form 3-hydroxy-3-methylglutaryl-CoA (HMG-CoA). Functions in the mevalonate (MVA) pathway leading to isopentenyl diphosphate (IPP), a key precursor for the biosynthesis of isoprenoid compounds that are building blocks of archaeal membrane lipids. The sequence is that of Hydroxymethylglutaryl-CoA synthase from Methanococcus maripaludis (strain C7 / ATCC BAA-1331).